We begin with the raw amino-acid sequence, 176 residues long: MTTDTHTLHIEEILDLLPHRFPFLLVDRVLDFEEGKFLRAVKNVSFNEPFFQGHFPGKPIFPGVLILEAMAQATGILAFKSRGKLEPGELYYFAGIDEARFKRPVVPGDQMIMEVEFVKERRGLTRFTGVAKVDGEIVCTATMMCARSKPAAPAESVVVKPDVVKPDVVNPVVKES.

Histidine 54 is a catalytic residue.

Belongs to the thioester dehydratase family. FabZ subfamily.

Its subcellular location is the cytoplasm. The enzyme catalyses a (3R)-hydroxyacyl-[ACP] = a (2E)-enoyl-[ACP] + H2O. Involved in unsaturated fatty acids biosynthesis. Catalyzes the dehydration of short chain beta-hydroxyacyl-ACPs and long chain saturated and unsaturated beta-hydroxyacyl-ACPs. This Yersinia pseudotuberculosis serotype O:1b (strain IP 31758) protein is 3-hydroxyacyl-[acyl-carrier-protein] dehydratase FabZ.